A 399-amino-acid polypeptide reads, in one-letter code: CCA-adding enzyme (399 aa).

2 residues coordinate ATP: Gly33 and Arg36. Positions 33 and 36 each coordinate CTP. Residues Asp46 and Asp48 each coordinate Mg(2+). ATP-binding residues include Arg117, Asp160, Arg163, Arg166, and Arg169. 5 residues coordinate CTP: Arg117, Asp160, Arg163, Arg166, and Arg169.

Belongs to the tRNA nucleotidyltransferase/poly(A) polymerase family. Bacterial CCA-adding enzyme type 3 subfamily. In terms of assembly, homodimer. The cofactor is Mg(2+).

The enzyme catalyses a tRNA precursor + 2 CTP + ATP = a tRNA with a 3' CCA end + 3 diphosphate. It carries out the reaction a tRNA with a 3' CCA end + 2 CTP + ATP = a tRNA with a 3' CCACCA end + 3 diphosphate. Its function is as follows. Catalyzes the addition and repair of the essential 3'-terminal CCA sequence in tRNAs without using a nucleic acid template. Adds these three nucleotides in the order of C, C, and A to the tRNA nucleotide-73, using CTP and ATP as substrates and producing inorganic pyrophosphate. tRNA 3'-terminal CCA addition is required both for tRNA processing and repair. Also involved in tRNA surveillance by mediating tandem CCA addition to generate a CCACCA at the 3' terminus of unstable tRNAs. While stable tRNAs receive only 3'-terminal CCA, unstable tRNAs are marked with CCACCA and rapidly degraded. The polypeptide is CCA-adding enzyme (Lactobacillus helveticus (strain DPC 4571)).